Here is a 199-residue protein sequence, read N- to C-terminus: Translation initiation factor IF-3 (199 aa).

It belongs to the IF-3 family. As to quaternary structure, monomer.

It is found in the cytoplasm. IF-3 binds to the 30S ribosomal subunit and shifts the equilibrium between 70S ribosomes and their 50S and 30S subunits in favor of the free subunits, thus enhancing the availability of 30S subunits on which protein synthesis initiation begins. The protein is Translation initiation factor IF-3 of Mycoplasmopsis pulmonis (strain UAB CTIP) (Mycoplasma pulmonis).